Here is a 3483-residue protein sequence, read N- to C-terminus: Nonribosomal peptide synthetase Ao415 (3483 aa).

The adenylation 1 stretch occupies residues 281-669; the sequence is TFKKLNETSN…DVHPLIKDVV (389 aa). The Carrier 1 domain maps to 775–851; the sequence is EVFDELSTKI…GLRDHVSGKK (77 aa). The residue at position 812 (Ser-812) is an O-(pantetheine 4'-phosphoryl)serine. Residues 886 to 1297 are condensation 1; sequence ANVLPCSPMQ…YCLLHMLQNQ (412 aa). Residues 1363–1758 are adenylation 2; sequence TYRQFDDMGN…SADKDVAEIV (396 aa). Residues 1865–1941 form the Carrier 2 domain; sequence EELSETEKVI…SLAKALSSAN (77 aa). Ser-1901 carries the O-(pantetheine 4'-phosphoryl)serine modification. A condensation 2 region spans residues 1981 to 2379; that stretch reads IKPCTPLQEG…LLKNPEQEVA (399 aa). The Carrier 3 domain maps to 2412-2485; sequence TEAAVSIRRE…RMVVYLSSTK (74 aa). Ser-2446 is modified (O-(pantetheine 4'-phosphoryl)serine). Positions 2520–2917 are condensation 3; it reads ESILPTTPLQ…MLQKIIGNPL (398 aa). Residues 2954 to 3030 enclose the Carrier 4 domain; that stretch reads DNYQNLERQV…KICLFLDKKQ (77 aa). An O-(pantetheine 4'-phosphoryl)serine modification is found at Ser-2991. Positions 3084–3368 are condensation 4; sequence SEGRIFLPTF…VQEDLLKIST (285 aa).

The protein belongs to the NRP synthetase family.

It functions in the pathway siderophore biosynthesis. Nonribosomal peptide synthetase; part of the gene cluster that mediates the biosynthesis of desferriferrichrome that chelates Fe(3+) to form ferrichrome. Fe(3+) is a key factor for induction of trap formation and the fungus uses the iron chelating desferriferrichrome to sequester Fe(3+) to inhibit trap formation and increase nematicidal activity. The biosynthesis of desferriferrichrome requires the action of the L-ornithine N(5)-oxygenase (LOO) Ao414 that hydroxylates L-ornithine at N(5), resulting in the formation of N(5)-hydroxyl-L-ornithine, which is subsequently N-acetylated to yield N(5)-acetyl-N(5)-hydroxy-L-ornithine (L-AHO). L-AHO harbors one hydroxamate moiety, which is the key core responsible for chelating iron. Then, L-AHO is further condensated with glycines to form desferriferrichrome through the NRPS protein Ao415. The chain is Nonribosomal peptide synthetase Ao415 from Arthrobotrys oligospora (strain ATCC 24927 / CBS 115.81 / DSM 1491) (Nematode-trapping fungus).